The sequence spans 317 residues: Putative methyltransferase YMR310C (317 aa).

At Ser190 the chain carries Phosphoserine.

This sequence belongs to the class IV-like SAM-binding methyltransferase superfamily.

The protein resides in the nucleus. In Saccharomyces cerevisiae (strain ATCC 204508 / S288c) (Baker's yeast), this protein is Putative methyltransferase YMR310C.